A 1290-amino-acid polypeptide reads, in one-letter code: MAGAASPCANGCGPGAPSDAEVLHLCRSLEVGTVMTLFYSKKSQRPERKTFQVKLETRQITWSRGADKIEGAIDIREIKEIRPGKTSRDFDRYQEDPAFRPDQSHCFVILYGMEFRLKTLSLQATSEDEVNMWIKGLTWLMEDTLQAPTPLQIERWLRKQFYSVDRNREDRISAKDLKNMLSQVNYRVPNMRFLRERLTDLEQRSGDITYGQFAQLYRSLMYSAQKTMDLPFLEASTLRAGERPELCRVSLPEFQQFLLDYQGELWAVDRLQVQEFMLSFLRDPLREIEEPYFFLDEFVTFLFSKENSVWNSQLDAVCPDTMNNPLSHYWISSSHNTYLTGDQFSSESSLEAYARCLRMGCRCIELDCWDGPDGMPVIYHGHTLTTKIKFSDVLHTIKEHAFVASEYPVILSIEDHCSIAQQRNMAQYFKKVLGDTLLTKPVEISADGLPSPNQLKRKILIKHKKLAEGSAYEEVPTSMMYSENDISNSIKNGILYLEDPVNHEWYPHYFVLTSSKIYYSEETSSDQGNEDEEEPKEVSSSTELHSNEKWFHGKLGAGRDGRHIAERLLTEYCIETGAPDGSFLVRESETFVGDYTLSFWRNGKVQHCRIHSRQDAGTPKFFLTDNLVFDSLYDLITHYQQVPLRCNEFEMRLSEPVPQTNAHESKEWYHASLTRAQAEHMLMRVPRDGAFLVRKRNEPNSYAISFRAEGKIKHCRVQQEGQTVMLGNSEFDSLVDLISYYEKHPLYRKMKLRYPINEEALEKIGTAEPDYGALYEGRNPGFYVEANPMPTFKCAVKALFDYKAQREDELTFIKSAIIQNVEKQEGGWWRGDYGGKKQLWFPSNYVEEMVNPVALEPEREHLDENSPLGDLLRGVLDVPACQIAIRPEGKNNRLFVFSISMASVAHWSLDVAADSQEELQDWVKKIREVAQTADARLTEGKIMERRKKIALELSELVVYCRPVPFDEEKIGTERACYRDMSSFPETKAEKYVNKAKGKKFLQYNRLQLSRIYPKGQRLDSSNYDPLPMWICGSQLVALNFQTPDKPMQMNQALFMTGRHCGYVLQPSTMRDEAFDPFDKSSLRGLEPCAISIEVLGARHLPKNGRGIVCPFVEIEVAGAEYDSTKQKTEFVVDNGLNPVWPAKPFHFQISNPEFAFLRFVVYEEDMFSDQNFLAQATFPVKGLKTGYRAVPLKNNYSEDLELASLLIKIDIFPAKENGDLSPFSGTSLRERGSDASGQLFHGRAREGSFESRYQQPFEDFRISQEHLADHFDSRERRAPRRTRVNGDNRL.

Ala-2 bears the N-acetylalanine mark. Positions 27 to 142 (RSLEVGTVMT…WIKGLTWLME (116 aa)) constitute a PH 1 domain. The EF-hand domain occupies 152 to 187 (QIERWLRKQFYSVDRNREDRISAKDLKNMLSQVNYR). Asp-165, Asn-167, Glu-169, Arg-171, and Asp-176 together coordinate Ca(2+). In terms of domain architecture, PI-PLC X-box spans 320–464 (DTMNNPLSHY…LKRKILIKHK (145 aa)). Residues His-335 and His-380 contribute to the active site. Positions 489-523 (SIKNGILYLEDPVNHEWYPHYFVLTSSKIYYSEET) constitute a PH 2; first part domain. Tyr-506 carries the post-translational modification Phosphotyrosine. The interval 522–544 (ETSSDQGNEDEEEPKEVSSSTEL) is disordered. SH2 domains are found at residues 550–657 (WFHG…SEPV) and 668–756 (WYHA…RYPI). The residue at position 771 (Tyr-771) is a Phosphotyrosine; by SYK. Position 775 is a phosphotyrosine (Tyr-775). Residue Tyr-783 is modified to Phosphotyrosine; by ITK, SYK and TXK. The SH3 domain occupies 791 to 851 (TFKCAVKALF…PSNYVEEMVN (61 aa)). The PH 2; second part domain occupies 895-931 (FVFSISMASVAHWSLDVAADSQEELQDWVKKIREVAQ). The region spanning 953–1070 (LSELVVYCRP…GYVLQPSTMR (118 aa)) is the PI-PLC Y-box domain. Tyr-977 is subject to Phosphotyrosine. The 124-residue stretch at 1071 to 1194 (DEAFDPFDKS…TGYRAVPLKN (124 aa)) folds into the C2 domain. Phosphoserine occurs at positions 1221, 1222, 1227, 1233, and 1248. The residue at position 1253 (Tyr-1253) is a Phosphotyrosine. Ser-1263 is modified (phosphoserine). Residues 1271-1290 (FDSRERRAPRRTRVNGDNRL) are disordered.

In terms of assembly, interacts with AGAP2 via its SH3 domain. Interacts (via SH2 domain) with RET. Interacts with FLT1 (tyrosine-phosphorylated). Interacts (via SH2 domain) with FGFR1, FGFR2, FGFR3 and FGFR4 (phosphorylated). Interacts with LAT (phosphorylated) upon TCR activation. Interacts (via SH3 domain) with the Pro-rich domain of TNK1. Associates with BLNK, VAV1, GRB2 and NCK1 in a B-cell antigen receptor-dependent fashion. Interacts with CBLB in activated T-cells; which inhibits phosphorylation. Interacts with SHB. Interacts (via SH3 domain) with the Arg/Gly-rich-flanked Pro-rich domains of KHDRBS1/SAM68. This interaction is selectively regulated by arginine methylation of KHDRBS1/SAM68. Interacts with INPP5D/SHIP1, THEMIS and CLNK. Interacts with AXL, FLT4 and KIT. Interacts with RALGPS1. Interacts (via the SH2 domains) with VIL1 (phosphorylated at C-terminus tyrosine phosphorylation sites). Interacts (via SH2 domain) with PDGFRA and PDGFRB (tyrosine phosphorylated). Interacts with PIP5K1C. Interacts with NTRK1 and NTRK2 (phosphorylated upon ligand-binding). Interacts with SYK; activates PLCG1. Interacts with GRB2, LAT and THEMIS upon TCR activation in thymocytes. Interacts with TESPA1; the association is increased with prolonged stimulation of the TCR and may facilitate the assembly of the LAT signalosome. Interacts (via C-terminal proline-rich domain (PRD)) with PLCG1 (via SH3 domain); this interaction leads to guanine nucleotide exchange from PlCG1 to DNM1 and enhances DNM1-dependent endocytosis. As to quaternary structure, (Microbial infection) Interacts (via SH3 domain) with HEV ORF3 protein. It depends on Ca(2+) as a cofactor. In terms of processing, tyrosine phosphorylated in response to signaling via activated FLT3, KIT and PDGFRA. Tyrosine phosphorylated by activated FGFR1, FGFR2, FGFR3 and FGFR4. Tyrosine phosphorylated by activated FLT1 and KDR. Tyrosine phosphorylated by activated PDGFRB. The receptor-mediated activation of PLCG1 involves its phosphorylation by tyrosine kinases, in response to ligation of a variety of growth factor receptors and immune system receptors. For instance, SYK phosphorylates and activates PLCG1 in response to ligation of the B-cell receptor. May be dephosphorylated by PTPRJ. Phosphorylated by ITK and TXK on Tyr-783 upon TCR activation in T-cells. Ubiquitinated by CBLB in activated T-cells.

It localises to the cell projection. The protein resides in the lamellipodium. Its subcellular location is the ruffle. It catalyses the reaction a 1,2-diacyl-sn-glycero-3-phospho-(1D-myo-inositol-4,5-bisphosphate) + H2O = 1D-myo-inositol 1,4,5-trisphosphate + a 1,2-diacyl-sn-glycerol + H(+). The catalysed reaction is a 1,2-diacyl-sn-glycero-3-phospho-(1D-myo-inositol) + H2O = 1D-myo-inositol 1-phosphate + a 1,2-diacyl-sn-glycerol + H(+). Its activity is regulated as follows. Activated by phosphorylation on tyrosine residues. Its function is as follows. Mediates the production of the second messenger molecules diacylglycerol (DAG) and inositol 1,4,5-trisphosphate (IP3). Plays an important role in the regulation of intracellular signaling cascades. Becomes activated in response to ligand-mediated activation of receptor-type tyrosine kinases, such as PDGFRA, PDGFRB, EGFR, FGFR1, FGFR2, FGFR3 and FGFR4. Plays a role in actin reorganization and cell migration. Guanine nucleotide exchange factor that binds the GTPase DNM1 and catalyzes the dissociation of GDP, allowing a GTP molecule to bind in its place, therefore enhancing DNM1-dependent endocytosis. The sequence is that of 1-phosphatidylinositol 4,5-bisphosphate phosphodiesterase gamma-1 from Homo sapiens (Human).